Reading from the N-terminus, the 288-residue chain is Diaminopimelate epimerase (288 aa).

Substrate is bound by residues Asn-13, Gln-51, and Asn-71. The Proton donor role is filled by Cys-80. Substrate-binding positions include 81–82, Asn-166, Asn-200, and 218–219; these read GN and ER. Catalysis depends on Cys-227, which acts as the Proton acceptor. A substrate-binding site is contributed by 228 to 229; it reads GT.

This sequence belongs to the diaminopimelate epimerase family. In terms of assembly, homodimer.

The protein resides in the cytoplasm. The enzyme catalyses (2S,6S)-2,6-diaminopimelate = meso-2,6-diaminopimelate. It participates in amino-acid biosynthesis; L-lysine biosynthesis via DAP pathway; DL-2,6-diaminopimelate from LL-2,6-diaminopimelate: step 1/1. Its function is as follows. Catalyzes the stereoinversion of LL-2,6-diaminopimelate (L,L-DAP) to meso-diaminopimelate (meso-DAP), a precursor of L-lysine and an essential component of the bacterial peptidoglycan. The chain is Diaminopimelate epimerase from Caulobacter vibrioides (strain ATCC 19089 / CIP 103742 / CB 15) (Caulobacter crescentus).